The following is a 766-amino-acid chain: EMILIN-3 (766 aa).

A signal peptide spans 1-22 (MGRRRLLVWLCAVAALLSGAQA). The EMI domain maps to 55–131 (HKALCAYVVH…PGFTGKRCPE (77 aa)). 3 disulfide bridges follow: C59–C121, C86–C92, and C120–C129. N66 carries N-linked (GlcNAc...) asparagine glycosylation. Positions 132–179 (HLTDHGAASPQLEPEPQIPSGQLDPGPRPPSYSRAAPSPHGRKGPGLF) are disordered. The N-linked (GlcNAc...) asparagine glycan is linked to N443. A coiled-coil region spans residues 467–491 (GTMLEERVQSLEERLATLAGELSHD). N-linked (GlcNAc...) asparagine glycans are attached at residues N562, N616, and N732. Coiled-coil stretches lie at residues 615-663 (ANTS…QLKA) and 726-761 (SHVD…EQVR).

Its subcellular location is the secreted. The protein resides in the extracellular space. It localises to the extracellular matrix. The protein is EMILIN-3 (EMILIN3) of Homo sapiens (Human).